The primary structure comprises 192 residues: Phage-like element PBSX protein XkdU (192 aa).

This sequence to B.subtilis YqcA.

This chain is Phage-like element PBSX protein XkdU (xkdU), found in Bacillus subtilis (strain 168).